A 692-amino-acid chain; its full sequence is Glycine--tRNA ligase beta subunit (692 aa).

The protein belongs to the class-II aminoacyl-tRNA synthetase family. In terms of assembly, tetramer of two alpha and two beta subunits.

Its subcellular location is the cytoplasm. It carries out the reaction tRNA(Gly) + glycine + ATP = glycyl-tRNA(Gly) + AMP + diphosphate. The sequence is that of Glycine--tRNA ligase beta subunit from Alteromonas mediterranea (strain DSM 17117 / CIP 110805 / LMG 28347 / Deep ecotype).